Here is a 381-residue protein sequence, read N- to C-terminus: L-lactate dehydrogenase (381 aa).

An FMN hydroxy acid dehydrogenase domain is found at 1-380; it reads MIISSASDYR…KPEALVDLSK (380 aa). Tyr-24 is a binding site for substrate. Ser-106 and Gln-127 together coordinate FMN. Tyr-129 serves as a coordination point for substrate. Residue Thr-155 coordinates FMN. Residue Arg-164 participates in substrate binding. Lys-251 is a binding site for FMN. The active-site Proton acceptor is the His-275. Residue Arg-278 participates in substrate binding. 306 to 330 is an FMN binding site; the sequence is DSGIRNGLDIVRMLALGADATMLGR.

This sequence belongs to the FMN-dependent alpha-hydroxy acid dehydrogenase family. It depends on FMN as a cofactor.

The protein localises to the cell inner membrane. The enzyme catalyses (S)-lactate + A = pyruvate + AH2. Its function is as follows. Catalyzes the conversion of L-lactate to pyruvate. Is coupled to the respiratory chain. In Haemophilus influenzae (strain 86-028NP), this protein is L-lactate dehydrogenase.